Consider the following 53-residue polypeptide: ATP synthase protein 8 (53 aa).

The helical transmembrane segment at 4–24 threads the bilayer; sequence MAPISWLLLFIIFSITFILFC.

This sequence belongs to the ATPase protein 8 family. In terms of assembly, F-type ATPases have 2 components, CF(1) - the catalytic core - and CF(0) - the membrane proton channel.

It localises to the mitochondrion membrane. In terms of biological role, mitochondrial membrane ATP synthase (F(1)F(0) ATP synthase or Complex V) produces ATP from ADP in the presence of a proton gradient across the membrane which is generated by electron transport complexes of the respiratory chain. F-type ATPases consist of two structural domains, F(1) - containing the extramembraneous catalytic core and F(0) - containing the membrane proton channel, linked together by a central stalk and a peripheral stalk. During catalysis, ATP synthesis in the catalytic domain of F(1) is coupled via a rotary mechanism of the central stalk subunits to proton translocation. Part of the complex F(0) domain. Minor subunit located with subunit a in the membrane. In Drosophila mauritiana (Fruit fly), this protein is ATP synthase protein 8 (mt:ATPase8).